Consider the following 402-residue polypeptide: Putative epoxide hydrolase AFT8 (402 aa).

This sequence belongs to the peptidase S33 family.

It participates in mycotoxin biosynthesis. Its function is as follows. Putative epoxide hydrolase; part of the gene clusters that mediate the biosynthesis of the host-selective toxins (HSTs) AF-toxins responsible for Alternaria black spot of strawberry disease by the strawberry pathotype. AF-toxin I and III are valine derivatives of 2,3-dyhydroxy-isovaleric acid and 2-hydroxy-isovaleric acid respectively, while AF II is an isoleucine derivative of 2-hydroxy-valeric acid. These derivatives are bound to a 9,10-epoxy-8-hydroxy-9-methyl-decatrienoic acid (EDA) moiety. On cellular level, AF-toxins affect plasma membrane of susceptible cells and cause a sudden increase in loss of K(+) after a few minutes of toxin treatment. The aldo-keto reductase AFTS1 catalyzes the conversion of 2-keto-isovaleric acid (2-KIV) to 2-hydroxy-isovaleric acid (2-HIV) by reduction of its ketone to an alcohol. The acyl-CoA ligase AFT1, the hydrolase AFT2 and the enoyl-CoA hydratases AFT3 and AFT6, but also the polyketide synthase AFT9, the acyl-CoA dehydrogenase AFT10, the cytochrome P450 monooxygenase AFT11 and the oxidoreductase AFT12 are all involved in the biosynthesis of the AK-, AF- and ACT-toxin common EDA structural moiety. The exact function of each enzyme, and of additional enzymes identified within the AF-toxin clusters have still to be determined. The protein is Putative epoxide hydrolase AFT8 of Alternaria alternata (Alternaria rot fungus).